A 219-amino-acid polypeptide reads, in one-letter code: Deoxyribose-phosphate aldolase (219 aa).

The active-site Proton donor/acceptor is the D89. K151 (schiff-base intermediate with acetaldehyde) is an active-site residue. Residue K180 is the Proton donor/acceptor of the active site.

It belongs to the DeoC/FbaB aldolase family. DeoC type 1 subfamily.

The protein localises to the cytoplasm. The catalysed reaction is 2-deoxy-D-ribose 5-phosphate = D-glyceraldehyde 3-phosphate + acetaldehyde. Its pathway is carbohydrate degradation; 2-deoxy-D-ribose 1-phosphate degradation; D-glyceraldehyde 3-phosphate and acetaldehyde from 2-deoxy-alpha-D-ribose 1-phosphate: step 2/2. Functionally, catalyzes a reversible aldol reaction between acetaldehyde and D-glyceraldehyde 3-phosphate to generate 2-deoxy-D-ribose 5-phosphate. The protein is Deoxyribose-phosphate aldolase of Coprothermobacter proteolyticus (strain ATCC 35245 / DSM 5265 / OCM 4 / BT).